We begin with the raw amino-acid sequence, 187 residues long: Dihydrofolate reductase (187 aa).

Residues 4–185 form the DHFR domain; that stretch reads PLNCIVAVSQ…IKYKFEVYEK (182 aa). Residues Ala-10 and 16-22 contribute to the NADP(+) site; that span reads GIGKNGD. 31–36 serves as a coordination point for substrate; that stretch reads EFKYFQ. Lys-33 carries the post-translational modification N6-acetyllysine; alternate. Position 33 is an N6-succinyllysine; alternate (Lys-33). 55 to 57 is an NADP(+) binding site; sequence RKT. Arg-71 lines the substrate pocket. NADP(+) contacts are provided by residues 77–79 and 117–124; these read SRE and GGSSVYQE.

The protein belongs to the dihydrofolate reductase family. In terms of assembly, homodimer.

It localises to the mitochondrion. The protein localises to the cytoplasm. The catalysed reaction is (6S)-5,6,7,8-tetrahydrofolate + NADP(+) = 7,8-dihydrofolate + NADPH + H(+). The protein operates within cofactor biosynthesis; tetrahydrofolate biosynthesis; 5,6,7,8-tetrahydrofolate from 7,8-dihydrofolate: step 1/1. In terms of biological role, key enzyme in folate metabolism. Contributes to the de novo mitochondrial thymidylate biosynthesis pathway. Catalyzes an essential reaction for de novo glycine and purine synthesis, and for DNA precursor synthesis. Binds its own mRNA. The protein is Dihydrofolate reductase (Dhfr) of Rattus norvegicus (Rat).